A 210-amino-acid polypeptide reads, in one-letter code: Acetoin utilization protein AcuA (210 aa).

One can recognise an N-acetyltransferase domain in the interval 19–189 (VLIEGPISPE…ANCLMARIGK (171 aa)).

This sequence belongs to the acetyltransferase family. Monomer.

It participates in ketone degradation; acetoin degradation. Its function is as follows. Part of the acuABC operon, which is possibly involved in the breakdown of acetoin and butanediol. Acts as an acetyltransferase inactivating acetyl-CoA synthetase AcsA via acetylation at a Lys residue. In Bacillus licheniformis (strain ATCC 14580 / DSM 13 / JCM 2505 / CCUG 7422 / NBRC 12200 / NCIMB 9375 / NCTC 10341 / NRRL NRS-1264 / Gibson 46), this protein is Acetoin utilization protein AcuA.